Here is a 1402-residue protein sequence, read N- to C-terminus: DNA-directed RNA polymerase subunit beta' (1402 aa).

Positions 72, 74, 87, and 90 each coordinate Zn(2+). 3 residues coordinate Mg(2+): D463, D465, and D467. Zn(2+)-binding residues include C811, C885, C892, and C895.

Belongs to the RNA polymerase beta' chain family. In terms of assembly, the RNAP catalytic core consists of 2 alpha, 1 beta, 1 beta' and 1 omega subunit. When a sigma factor is associated with the core the holoenzyme is formed, which can initiate transcription. Mg(2+) serves as cofactor. Requires Zn(2+) as cofactor.

The catalysed reaction is RNA(n) + a ribonucleoside 5'-triphosphate = RNA(n+1) + diphosphate. Its function is as follows. DNA-dependent RNA polymerase catalyzes the transcription of DNA into RNA using the four ribonucleoside triphosphates as substrates. The chain is DNA-directed RNA polymerase subunit beta' from Paracoccus denitrificans (strain Pd 1222).